The primary structure comprises 369 residues: Glutamate 5-kinase (369 aa).

K9 serves as a coordination point for ATP. The substrate site is built by S49, D136, and N148. Residues 168 to 169 and 210 to 216 each bind ATP; these read TD and TGGMLTK. In terms of domain architecture, PUA spans 275–355; the sequence is RGSVYVDEGA…KGVFIHRDDW (81 aa).

This sequence belongs to the glutamate 5-kinase family.

It is found in the cytoplasm. It carries out the reaction L-glutamate + ATP = L-glutamyl 5-phosphate + ADP. It participates in amino-acid biosynthesis; L-proline biosynthesis; L-glutamate 5-semialdehyde from L-glutamate: step 1/2. In terms of biological role, catalyzes the transfer of a phosphate group to glutamate to form L-glutamate 5-phosphate. In Neisseria meningitidis serogroup C / serotype 2a (strain ATCC 700532 / DSM 15464 / FAM18), this protein is Glutamate 5-kinase.